The primary structure comprises 99 residues: Endothelin receptor type B (99 aa).

Topologically, residues 1-8 (PFGAEMCK) are extracellular. Residues Cys7 and Cys88 are joined by a disulfide bond. The helical transmembrane segment at 9-30 (LVPFIQKASVGITVLSLCALSI) threads the bilayer. Residues 31-51 (DRYRAVASWSRIKGIGIPKWT) lie on the Cytoplasmic side of the membrane. A helical transmembrane segment spans residues 52 to 76 (AVEIVLIWVVSVVLAVPEAIGFDMI). Residues 77–99 (TMDYKGSYLRICLLHPVQKTAFM) lie on the Extracellular side of the membrane.

This sequence belongs to the G-protein coupled receptor 1 family. Endothelin receptor subfamily. EDNRB sub-subfamily.

The protein localises to the cell membrane. In terms of biological role, non-specific receptor for endothelin 1, 2, and 3. Mediates its action by association with G proteins that activate a phosphatidylinositol-calcium second messenger system. This chain is Endothelin receptor type B (EDNRB), found in Macaca fascicularis (Crab-eating macaque).